The following is a 352-amino-acid chain: MSASTTATLRHDWTLAEVRALFVQPFNDLLFQAQTVHRAHFDANRVQVSTLLSIKTGACPEDCKYCPQSGHYNTGLEKEKLLEVQKVLEEAARAKAIGSTRFCMGAAWKHPSAKDMPYVLEMVKGVKAMGMETCMTLGRLDQEQTEALATAGLDYYNHNLDTSPEFYGSIITTRTYSERLQTLAYVRDAGMKICSGGILGMGESLDDRAGLLIQLANLPEHPESVPINMLVKVAGTPLENAEDVDPFDFIRMLAVARILMPKSHVRLSAGREAMNEQMQALAFFAGANSIFYGDKLLTTANPQADKDMLLFSRLGIKPEAGEGHADEVHQAAIEQALVEQQSSSMFYDAASA.

The 219-residue stretch at 44–262 folds into the Radical SAM core domain; it reads NRVQVSTLLS…LAVARILMPK (219 aa). The [4Fe-4S] cluster site is built by cysteine 59, cysteine 63, and cysteine 66. 4 residues coordinate [2Fe-2S] cluster: cysteine 103, cysteine 134, cysteine 194, and arginine 266.

The protein belongs to the radical SAM superfamily. Biotin synthase family. In terms of assembly, homodimer. The cofactor is [4Fe-4S] cluster. Requires [2Fe-2S] cluster as cofactor.

The enzyme catalyses (4R,5S)-dethiobiotin + (sulfur carrier)-SH + 2 reduced [2Fe-2S]-[ferredoxin] + 2 S-adenosyl-L-methionine = (sulfur carrier)-H + biotin + 2 5'-deoxyadenosine + 2 L-methionine + 2 oxidized [2Fe-2S]-[ferredoxin]. Its pathway is cofactor biosynthesis; biotin biosynthesis; biotin from 7,8-diaminononanoate: step 2/2. Functionally, catalyzes the conversion of dethiobiotin (DTB) to biotin by the insertion of a sulfur atom into dethiobiotin via a radical-based mechanism. The protein is Biotin synthase of Pseudomonas syringae pv. syringae (strain B728a).